The sequence spans 224 residues: MYEFDWSSIVPSLPYLLDGLVITLKITVTAVVIGILWGTMLAVMRLSSFAPVAWFAKAYVNVFRSIPLVMVLLWFYLIVPGFLQNVLGLSPKNDIRLISAMVAFSMFEAAYYSEIIRAGIQSISRGQSSAALALGMTHWQSMKLIILPQAFRAMVPLLLTQGIVLFQDTSLVYVLSLADFFRTASTIGERDGTQVEMILFAGFVYFVISLSASLLVSYLKRRTA.

Over 1–19 the chain is Periplasmic; sequence MYEFDWSSIVPSLPYLLDG. Residues 20–40 form a helical membrane-spanning segment; that stretch reads LVITLKITVTAVVIGILWGTM. An ABC transmembrane type-1 domain is found at 20–216; it reads LVITLKITVT…VISLSASLLV (197 aa). Residues 41–67 lie on the Cytoplasmic side of the membrane; sequence LAVMRLSSFAPVAWFAKAYVNVFRSIP. Residues 68-88 form a helical membrane-spanning segment; it reads LVMVLLWFYLIVPGFLQNVLG. Residues 89 to 94 lie on the Periplasmic side of the membrane; the sequence is LSPKND. A helical transmembrane segment spans residues 95 to 112; the sequence is IRLISAMVAFSMFEAAYY. The Cytoplasmic portion of the chain corresponds to 113–154; that stretch reads SEIIRAGIQSISRGQSSAALALGMTHWQSMKLIILPQAFRAM. A helical transmembrane segment spans residues 155 to 175; it reads VPLLLTQGIVLFQDTSLVYVL. Topologically, residues 176–196 are periplasmic; sequence SLADFFRTASTIGERDGTQVE. The helical transmembrane segment at 197-217 threads the bilayer; that stretch reads MILFAGFVYFVISLSASLLVS. Residues 218-224 are Cytoplasmic-facing; sequence YLKRRTA.

It belongs to the binding-protein-dependent transport system permease family. HisMQ subfamily. The complex is composed of two ATP-binding proteins (GltL), two transmembrane proteins (GltJ and GltK) and a solute-binding protein (GltI).

The protein localises to the cell inner membrane. Part of the ABC transporter complex GltIJKL involved in glutamate and aspartate uptake. Probably responsible for the translocation of the substrate across the membrane. The polypeptide is Glutamate/aspartate import permease protein GltK (gltK) (Escherichia coli O157:H7).